We begin with the raw amino-acid sequence, 428 residues long: Enolase (428 aa).

Q163 is a binding site for (2R)-2-phosphoglycerate. E205 acts as the Proton donor in catalysis. Mg(2+)-binding residues include D242, E285, and D312. The (2R)-2-phosphoglycerate site is built by K337, R366, S367, and K388. Catalysis depends on K337, which acts as the Proton acceptor.

It belongs to the enolase family. Requires Mg(2+) as cofactor.

The protein resides in the cytoplasm. It is found in the secreted. The protein localises to the cell surface. It carries out the reaction (2R)-2-phosphoglycerate = phosphoenolpyruvate + H2O. The protein operates within carbohydrate degradation; glycolysis; pyruvate from D-glyceraldehyde 3-phosphate: step 4/5. Functionally, catalyzes the reversible conversion of 2-phosphoglycerate (2-PG) into phosphoenolpyruvate (PEP). It is essential for the degradation of carbohydrates via glycolysis. In Rhodopirellula baltica (strain DSM 10527 / NCIMB 13988 / SH1), this protein is Enolase.